Consider the following 190-residue polypeptide: Putative cyclic ADP-D-ribose synthase ThsB (190 aa).

It belongs to the Thoeris B TIR-like family. Homodimer.

Its subcellular location is the cytoplasm. With respect to regulation, activated upon phage infection. Functionally, TIR-like domain-containing component of the Thoeris antiviral defense system, composed of ThsA and ThsB. Expression of ThsA and ThsB in B.subtilis (strain BEST7003) confers resistance to phages SBSphiC, SBSphiJ and SPO1. Phage infection activates this protein, generating a signal molecule that in turn activates ThsA. Its function is as follows. Probably hydrolyzes NAD(+) to make a cyclic ADP-D-ribose (cADPR) signaling molecule; might make 3'cADPR. The chain is Putative cyclic ADP-D-ribose synthase ThsB from Bacillus amyloliquefaciens (strain Y2) (Bacillus amyloliquefaciens subsp. plantarum (strain B9601-Y2)).